The following is a 78-amino-acid chain: Putative DNA-binding protein MT0521 (78 aa).

A DNA-binding region (H-T-H motif) is located at residues 24–45; that stretch reads LLTVAEVAALMRVSKMTVYRLV.

This is Putative DNA-binding protein MT0521 from Mycobacterium tuberculosis (strain CDC 1551 / Oshkosh).